We begin with the raw amino-acid sequence, 369 residues long: MTVFTPTILLCAGGTGGHLFPAESLAHALRARGIRVALATDARVDSIASEFPASEVVTIASATPSGRSPLKRAGAVLTLGRGFGVAAKEIRRINPAAIVGFGGYPTVPPVLAGQILRVPTILHEQNAVMGRANAFLARGARTIATGFKVVRGVPDKARAPRIHTGNPLRPAVIEAAKVPYPAFGPDDALRLLVFGGSQGARVMGEVVPEAIARLPDALRARLHLVQQVRPEDLTAVQNRYLAMGLAGIEAAPFFKDLPARMAASHLVVSRSGASTVSELAAIGRPAILVPLPGSLDQDQAANAATLDAIGAALAVKQPDFTPERLAAELTACFATPAKLTAAADAARSAGIHDAAERLAEVVVETAART.

Residues 15-17 (TGG), Asn126, Arg169, Ser197, and Gln299 each bind UDP-N-acetyl-alpha-D-glucosamine.

Belongs to the glycosyltransferase 28 family. MurG subfamily.

Its subcellular location is the cell inner membrane. It carries out the reaction di-trans,octa-cis-undecaprenyl diphospho-N-acetyl-alpha-D-muramoyl-L-alanyl-D-glutamyl-meso-2,6-diaminopimeloyl-D-alanyl-D-alanine + UDP-N-acetyl-alpha-D-glucosamine = di-trans,octa-cis-undecaprenyl diphospho-[N-acetyl-alpha-D-glucosaminyl-(1-&gt;4)]-N-acetyl-alpha-D-muramoyl-L-alanyl-D-glutamyl-meso-2,6-diaminopimeloyl-D-alanyl-D-alanine + UDP + H(+). Its pathway is cell wall biogenesis; peptidoglycan biosynthesis. In terms of biological role, cell wall formation. Catalyzes the transfer of a GlcNAc subunit on undecaprenyl-pyrophosphoryl-MurNAc-pentapeptide (lipid intermediate I) to form undecaprenyl-pyrophosphoryl-MurNAc-(pentapeptide)GlcNAc (lipid intermediate II). The sequence is that of UDP-N-acetylglucosamine--N-acetylmuramyl-(pentapeptide) pyrophosphoryl-undecaprenol N-acetylglucosamine transferase from Methylobacterium radiotolerans (strain ATCC 27329 / DSM 1819 / JCM 2831 / NBRC 15690 / NCIMB 10815 / 0-1).